We begin with the raw amino-acid sequence, 277 residues long: Thiazole synthase (277 aa).

Lys-116 (schiff-base intermediate with DXP) is an active-site residue. 1-deoxy-D-xylulose 5-phosphate contacts are provided by residues Gly-177, 203–204 (AG), and 225–226 (NT).

It belongs to the ThiG family. In terms of assembly, homotetramer. Forms heterodimers with either ThiH or ThiS.

Its subcellular location is the cytoplasm. It carries out the reaction [ThiS sulfur-carrier protein]-C-terminal-Gly-aminoethanethioate + 2-iminoacetate + 1-deoxy-D-xylulose 5-phosphate = [ThiS sulfur-carrier protein]-C-terminal Gly-Gly + 2-[(2R,5Z)-2-carboxy-4-methylthiazol-5(2H)-ylidene]ethyl phosphate + 2 H2O + H(+). Its pathway is cofactor biosynthesis; thiamine diphosphate biosynthesis. In terms of biological role, catalyzes the rearrangement of 1-deoxy-D-xylulose 5-phosphate (DXP) to produce the thiazole phosphate moiety of thiamine. Sulfur is provided by the thiocarboxylate moiety of the carrier protein ThiS. In vitro, sulfur can be provided by H(2)S. In Thermosynechococcus vestitus (strain NIES-2133 / IAM M-273 / BP-1), this protein is Thiazole synthase.